The primary structure comprises 563 residues: Pentatricopeptide repeat-containing protein At4g39620, chloroplastic (563 aa).

Residues 1–47 (MDYLLTSPSSLRFSDFISSIPKETDHKWLRFSVNLGDARRSTRTRIT) constitute a chloroplast transit peptide. PPR repeat units follow at residues 132-166 (DNGVYSKLISVMGKKGQTRMAMWLFSEMKNSGCRP), 167-197 (DASVYNALITAHLHTRDKAKALEKVRGYLDK), 207-241 (NVVTYNILLRAFAQSGKVDQVNALFKDLDMSPVSP), 242-276 (DVYTFNGVMDAYGKNGMIKEMEAVLTRMRSNECKP), 277-311 (DIITFNVLIDSYGKKQEFEKMEQTFKSLMRSKEKP), 312-346 (TLPTFNSMIINYGKARMIDKAEWVFKKMNDMNYIP), 347-381 (SFITYECMIMMYGYCGSVSRAREIFEEVGESDRVL), 382-416 (KASTLNAMLEVYCRNGLYIEADKLFHNASAFRVHP), and 417-451 (DASTYKFLYKAYTKADMKEQVQILMKKMEKDGIVP). 2 disordered regions span residues 468–501 (PGSGSENRKSTRSSRSRDSPKGRGGNQLTEFQDK) and 520–551 (NLSGHDKGSRDESRKPSQEKQPLFASDQNNMM). A compositionally biased stretch (basic and acidic residues) spans 520–537 (NLSGHDKGSRDESRKPSQ).

It belongs to the PPR family. P subfamily.

The protein localises to the plastid. It localises to the chloroplast. Essential for embryo development. The polypeptide is Pentatricopeptide repeat-containing protein At4g39620, chloroplastic (Arabidopsis thaliana (Mouse-ear cress)).